A 301-amino-acid chain; its full sequence is Probable alpha-L-glutamate ligase (301 aa).

An ATP-grasp domain is found at Leu104–Glu287. Residues Lys141, Glu178–Tyr179, Asp187, and Arg211–Asn213 contribute to the ATP site. Positions 248, 260, and 262 each coordinate Mg(2+). Mn(2+) is bound by residues Asp248, Glu260, and Asn262.

It belongs to the RimK family. Mg(2+) serves as cofactor. Requires Mn(2+) as cofactor.

The polypeptide is Probable alpha-L-glutamate ligase (Azotobacter vinelandii (strain DJ / ATCC BAA-1303)).